We begin with the raw amino-acid sequence, 268 residues long: Undecaprenyl-diphosphatase (268 aa).

The next 7 membrane-spanning stretches (helical) occupy residues F47–L67, F83–G103, L109–V129, F144–V164, A184–L204, L217–F237, and F246–L266.

This sequence belongs to the UppP family.

It localises to the cell inner membrane. It catalyses the reaction di-trans,octa-cis-undecaprenyl diphosphate + H2O = di-trans,octa-cis-undecaprenyl phosphate + phosphate + H(+). Catalyzes the dephosphorylation of undecaprenyl diphosphate (UPP). Confers resistance to bacitracin. This is Undecaprenyl-diphosphatase from Rhodopseudomonas palustris (strain BisB18).